The following is a 602-amino-acid chain: MLQQWLRQSPAAAGLLRCSRYRGPQAALLQLSPQRAPTYHAIRSLQTSAAESQERIPLRKQLKQGAKGLKAQKRQRRESEEASRQTWELTVGIEIHAQLNTETKLFSRASTSSTDTPNSNVALFDLAFPGSQPEFQAATLLPALRAAIALNCDIQPISRFDRKHYFYQDQPAGYQITQYYEPFARNGYIDLFKHDGIAPEDGDHVRIGIKQVQLEQDTAKSQEYPPSTQLLDFNRVSHPLIEIITMPQIHTPATAAACVRKIQSVLQSCSAVTTGMELGGLRADVNVSIRRRDEAPGTHQYGGIGGLGQRTEIKNLSSFKAVEDAIIAEKNRQIAVLESGGVIEGETRGWTIGSTETRKLRGKEGEVDYRYMPDPDLPPLYIGEDLVSGLRQALPTPPDELIELLAGSDYGLPIEDAKPLIELDDGARLEYYQDVVEILRSLQQDQDAKSRTILARVAGNWVLHEFGGLWTKADLAWDAHRVPPQTLAQIIDQLQRKRITGATAKQVLVMIFDGDRRSLPQLLEEENLLLRPLSREEYIALAETAMSQNPQMVEQIRSKNQLGKLGWFVGQMMRMGEKGRVEAQKADEILRELILGQSGSQP.

A mitochondrion-targeting transit peptide spans 1 to 52 (MLQQWLRQSPAAAGLLRCSRYRGPQAALLQLSPQRAPTYHAIRSLQTSAAES). Positions 61–83 (QLKQGAKGLKAQKRQRRESEEAS) are disordered.

This sequence belongs to the GatB/GatE family. GatB subfamily. As to quaternary structure, subunit of the heterotrimeric GatCAB amidotransferase (AdT) complex, composed of A, B and C subunits.

It localises to the mitochondrion. The enzyme catalyses L-glutamyl-tRNA(Gln) + L-glutamine + ATP + H2O = L-glutaminyl-tRNA(Gln) + L-glutamate + ADP + phosphate + H(+). Functionally, allows the formation of correctly charged Gln-tRNA(Gln) through the transamidation of misacylated Glu-tRNA(Gln) in the mitochondria. The reaction takes place in the presence of glutamine and ATP through an activated gamma-phospho-Glu-tRNA(Gln). The polypeptide is Glutamyl-tRNA(Gln) amidotransferase subunit B, mitochondrial (Aspergillus clavatus (strain ATCC 1007 / CBS 513.65 / DSM 816 / NCTC 3887 / NRRL 1 / QM 1276 / 107)).